Reading from the N-terminus, the 212-residue chain is Ribonuclease HII (212 aa).

The RNase H type-2 domain maps to S7 to E212. Positions 13, 14, and 111 each coordinate a divalent metal cation.

This sequence belongs to the RNase HII family. Mn(2+) serves as cofactor. Mg(2+) is required as a cofactor.

The protein resides in the cytoplasm. It carries out the reaction Endonucleolytic cleavage to 5'-phosphomonoester.. In terms of biological role, endonuclease that specifically degrades the RNA of RNA-DNA hybrids. The sequence is that of Ribonuclease HII from Methanosphaera stadtmanae (strain ATCC 43021 / DSM 3091 / JCM 11832 / MCB-3).